A 130-amino-acid polypeptide reads, in one-letter code: Small ribosomal subunit protein uS11 (130 aa).

Belongs to the universal ribosomal protein uS11 family. In terms of assembly, part of the 30S ribosomal subunit. Interacts with proteins S7 and S18. Binds to IF-3.

Functionally, located on the platform of the 30S subunit, it bridges several disparate RNA helices of the 16S rRNA. Forms part of the Shine-Dalgarno cleft in the 70S ribosome. The chain is Small ribosomal subunit protein uS11 from Xanthomonas campestris pv. campestris (strain B100).